Here is an 883-residue protein sequence, read N- to C-terminus: Valine--tRNA ligase (883 aa).

Positions 46 to 56 match the 'HIGH' region motif; it reads PNVTGKLHLGH. The 'KMSKS' region signature appears at 520 to 524; sequence KMSKS. Lysine 523 is a binding site for ATP. A coiled-coil region spans residues 809 to 883; it reads LADLLNVEEE…RIKEMEKLIK (75 aa).

It belongs to the class-I aminoacyl-tRNA synthetase family. ValS type 1 subfamily. In terms of assembly, monomer.

The protein localises to the cytoplasm. The catalysed reaction is tRNA(Val) + L-valine + ATP = L-valyl-tRNA(Val) + AMP + diphosphate. In terms of biological role, catalyzes the attachment of valine to tRNA(Val). As ValRS can inadvertently accommodate and process structurally similar amino acids such as threonine, to avoid such errors, it has a 'posttransfer' editing activity that hydrolyzes mischarged Thr-tRNA(Val) in a tRNA-dependent manner. This chain is Valine--tRNA ligase, found in Streptococcus mutans serotype c (strain ATCC 700610 / UA159).